A 415-amino-acid polypeptide reads, in one-letter code: MNEVLAKGKKAKEIARELVLKSTEQKNEALSAIADQLILETAYILEENKKDIEEGKAKGFSDSLLDRLMLNEQRIVDMTEGIKQLIELRDPVGDCVSAWERPNGLSIQEMRVPLGVVGMIYEARPNVTVDAATICLKTGNAVILRGSSSAIHSNKAIVAVIHRALKQTSLPQESVQLIEDTTRDSAKQLFTMNDYLDVLIPRGGKQLIDTVVREASVPVLETGAGNCHVFIDETADKQMAFDIIINAKTQRPSVCNAIETIVLHEKWAEQYGSELFSSLKKRGVELRGDQKALAMDSSIVLASEEDWGTEFLSLTLAVKLVSSIEEAIHHINTYGSMHSEAIISENEENVSKFFVSVDAAALYHNASTRFTDGYEFGFGAEIGISTQKLHVRGPMGLPALTSIKYVIRGNGQIRK.

The protein belongs to the gamma-glutamyl phosphate reductase family.

The protein resides in the cytoplasm. The enzyme catalyses L-glutamate 5-semialdehyde + phosphate + NADP(+) = L-glutamyl 5-phosphate + NADPH + H(+). It participates in amino-acid biosynthesis; L-proline biosynthesis; L-glutamate 5-semialdehyde from L-glutamate: step 2/2. In terms of biological role, catalyzes the NADPH-dependent reduction of L-glutamate 5-phosphate into L-glutamate 5-semialdehyde and phosphate. The product spontaneously undergoes cyclization to form 1-pyrroline-5-carboxylate. The polypeptide is Gamma-glutamyl phosphate reductase (Bacillus cereus (strain ZK / E33L)).